A 355-amino-acid polypeptide reads, in one-letter code: uncharacterized protein (355 aa).

C2 (for GATase activity) is an active-site residue. The Glutamine amidotransferase type-2 domain occupies 2–248 (CELLGICFNK…NGELMVFKNG (247 aa)).

This is an uncharacterized protein from Methanocaldococcus jannaschii (strain ATCC 43067 / DSM 2661 / JAL-1 / JCM 10045 / NBRC 100440) (Methanococcus jannaschii).